We begin with the raw amino-acid sequence, 317 residues long: Glycine--tRNA ligase alpha subunit (317 aa).

This sequence belongs to the class-II aminoacyl-tRNA synthetase family. In terms of assembly, tetramer of two alpha and two beta subunits.

It localises to the cytoplasm. The enzyme catalyses tRNA(Gly) + glycine + ATP = glycyl-tRNA(Gly) + AMP + diphosphate. This is Glycine--tRNA ligase alpha subunit from Leptothrix cholodnii (strain ATCC 51168 / LMG 8142 / SP-6) (Leptothrix discophora (strain SP-6)).